A 428-amino-acid polypeptide reads, in one-letter code: Enolase (428 aa).

Position 163 (Q163) interacts with (2R)-2-phosphoglycerate. The active-site Proton donor is the E205. Mg(2+)-binding residues include D242, E286, and D313. Residues K338, R367, S368, and K389 each coordinate (2R)-2-phosphoglycerate. The Proton acceptor role is filled by K338.

This sequence belongs to the enolase family. Requires Mg(2+) as cofactor.

Its subcellular location is the cytoplasm. The protein resides in the secreted. It is found in the cell surface. It catalyses the reaction (2R)-2-phosphoglycerate = phosphoenolpyruvate + H2O. It functions in the pathway carbohydrate degradation; glycolysis; pyruvate from D-glyceraldehyde 3-phosphate: step 4/5. Catalyzes the reversible conversion of 2-phosphoglycerate (2-PG) into phosphoenolpyruvate (PEP). It is essential for the degradation of carbohydrates via glycolysis. The protein is Enolase of Bordetella avium (strain 197N).